A 250-amino-acid chain; its full sequence is Probable transcriptional regulatory protein Plut_1643 (250 aa).

This sequence belongs to the TACO1 family.

Its subcellular location is the cytoplasm. In Chlorobium luteolum (strain DSM 273 / BCRC 81028 / 2530) (Pelodictyon luteolum), this protein is Probable transcriptional regulatory protein Plut_1643.